Reading from the N-terminus, the 365-residue chain is MSHNTFGHLFRVTTWGESHGPALGCVVDGCPPGLRFKLEDLQVWLDKRKPGQSRFVTQRREDDLVKVLSGVMLDADGETMTSTGTPISMLIENTDQRSKDYGEIARQYRPGHADFTYDLKYGIRDYRGGGRSSARETAARVAAGGIARLVVPGVTVRGALVQIGKHKIDRRNWDWDQVGQNPFFSPDAAIVPVWEEYLDGIRKAGSSIGAVVEVVAEGVPAGLGAPIYAKLDQDIASLLMSINAVKGVEIGNGFAAAETSGEDNADEMRMGNDGTPIFLSNNAGGILGGISTGQPVVARFAVKPTSSILTERQSIDADGKNVDVRTKGRHDPCVGIRAVPIGEAMVACAIADHYLRDRGQTGRLK.

Residues Arg48 and Arg54 each contribute to the NADP(+) site. FMN-binding positions include 131-133 (RSS), 243-244 (NA), Gly288, 303-307 (KPTSS), and Arg329.

Belongs to the chorismate synthase family. In terms of assembly, homotetramer. Requires FMNH2 as cofactor.

The catalysed reaction is 5-O-(1-carboxyvinyl)-3-phosphoshikimate = chorismate + phosphate. It participates in metabolic intermediate biosynthesis; chorismate biosynthesis; chorismate from D-erythrose 4-phosphate and phosphoenolpyruvate: step 7/7. In terms of biological role, catalyzes the anti-1,4-elimination of the C-3 phosphate and the C-6 proR hydrogen from 5-enolpyruvylshikimate-3-phosphate (EPSP) to yield chorismate, which is the branch point compound that serves as the starting substrate for the three terminal pathways of aromatic amino acid biosynthesis. This reaction introduces a second double bond into the aromatic ring system. This is Chorismate synthase from Rhizobium etli (strain CIAT 652).